A 79-amino-acid chain; its full sequence is GVSFHVGSGAEDPKSFVKAVEDSRFVFDQAAEVGFDLKVLDVGGGFSEDTFERFAATLSDALDEYFPPHIRIIAEPGRI.

Pyridoxal 5'-phosphate contacts are provided by residues serine 8, glycine 45, and 75-78 (EPGR).

It belongs to the Orn/Lys/Arg decarboxylase class-II family. In terms of assembly, homodimer. Only the dimer is catalytically active, as the active sites are constructed of residues from both monomers. Requires pyridoxal 5'-phosphate as cofactor.

Its subcellular location is the cytoplasm. It catalyses the reaction L-ornithine + H(+) = putrescine + CO2. It functions in the pathway amine and polyamine biosynthesis; putrescine biosynthesis via L-ornithine pathway; putrescine from L-ornithine: step 1/1. Its activity is regulated as follows. Inhibited by antizyme (AZ) OAZ1 in response to polyamine levels. AZ inhibits the assembly of the functional homodimer by binding to ODC monomers and targeting them for ubiquitin-independent proteolytic destruction by the 26S proteasome. Catalyzes the first and rate-limiting step of polyamine biosynthesis that converts ornithine into putrescine, which is the precursor for the polyamines, spermidine and spermine. Polyamines are essential for cell proliferation and are implicated in cellular processes, ranging from DNA replication to apoptosis. This is Ornithine decarboxylase (ODC) from Paracoccidioides brasiliensis.